Consider the following 189-residue polypeptide: Probable pericyclase scpY (189 aa).

This sequence belongs to the pericyclase pydY family.

The protein operates within mycotoxin biosynthesis. In terms of biological role, probable pericyclase; part of the gene scp cluster that mediates the biosynthesis of a hirsutellone-like compound that has still to be identified. This chain is Probable pericyclase scpY, found in Mollisia scopiformis (Conifer needle endophyte fungus).